A 152-amino-acid chain; its full sequence is UPF0225 protein YchJ (152 aa).

Belongs to the UPF0225 family.

This is UPF0225 protein YchJ from Shigella dysenteriae serotype 1 (strain Sd197).